We begin with the raw amino-acid sequence, 122 residues long: Small ribosomal subunit protein bS6 (122 aa).

A disordered region spans residues 96-122 (ETAPSPMMKAVQKEDAAKSHRTEAPAA). Positions 106–122 (VQKEDAAKSHRTEAPAA) are enriched in basic and acidic residues.

It belongs to the bacterial ribosomal protein bS6 family.

In terms of biological role, binds together with bS18 to 16S ribosomal RNA. In Herminiimonas arsenicoxydans, this protein is Small ribosomal subunit protein bS6.